The sequence spans 120 residues: Large ribosomal subunit protein uL18 (120 aa).

The protein belongs to the universal ribosomal protein uL18 family. In terms of assembly, part of the 50S ribosomal subunit; part of the 5S rRNA/L5/L18/L25 subcomplex. Contacts the 5S and 23S rRNAs.

In terms of biological role, this is one of the proteins that bind and probably mediate the attachment of the 5S RNA into the large ribosomal subunit, where it forms part of the central protuberance. The sequence is that of Large ribosomal subunit protein uL18 from Geobacillus sp. (strain WCH70).